Reading from the N-terminus, the 417-residue chain is Odorant receptor Or1 (417 aa).

Residues 1–2 lie on the Cytoplasmic side of the membrane; the sequence is MK. The chain crosses the membrane as a helical span at residues 3–23; the sequence is LNKLNPRWDAYDRRDSFWLQL. Topologically, residues 24 to 45 are extracellular; the sequence is LCLKYLGLWPPEDTDQATRNRY. A helical transmembrane segment spans residues 46–66; it reads IAYGWALRIMFLHLYALTQAL. Topologically, residues 67–73 are cytoplasmic; sequence YFKDVKD. The chain crosses the membrane as a helical span at residues 74–94; the sequence is INDIANALFVLMTQVTLIYKL. At 95–133 the chain is on the extracellular side; sequence EKFNYNIARIQACLRKLNCTLYHPKQREEFSPVLQSMSG. N-linked (GlcNAc...) asparagine glycosylation occurs at N112. A helical transmembrane segment spans residues 134–154; that stretch reads VFWLMIFLMFVAIFTIIMWVM. Residues 155–178 are Cytoplasmic-facing; that stretch reads SPAFDNERRLPVPAWFPVDYHHSD. Residues 179 to 199 form a helical membrane-spanning segment; that stretch reads IVYGVLFLYQTIGIVMSATYN. The Extracellular portion of the chain corresponds to 200–284; it reads FSTDTMFSGL…ILSFGDEVQD (85 aa). The helical transmembrane segment at 285–305 threads the bilayer; the sequence is IFQGSIFAQVCASVIIICMTL. Over 306–317 the chain is Cytoplasmic; the sequence is LQATGDDVTMAD. Residues 318-338 form a helical membrane-spanning segment; the sequence is LLGCGFYLLVMTSQVFIFCYV. Residues 339–417 lie on the Extracellular side of the membrane; sequence GNEISYTTDK…LAVLQSMESE (79 aa).

This sequence belongs to the insect chemoreceptor superfamily. Heteromeric odorant receptor channel (TC 1.A.69) family. Or2a subfamily. Female-specific antennae and maxillary palp expression.

The protein localises to the cell membrane. Its function is as follows. Odorant receptor which plays a critical role in the anthropophilic host-seeking behavior; establishes the host preference to transmit malaria. May participate in the phenomenon of decreased host-seeking behavior in disease vector mosquitoes after blood feeding. The protein is Odorant receptor Or1 (OR1) of Anopheles gambiae (African malaria mosquito).